The sequence spans 495 residues: Putative aldehyde dehydrogenase DhaS (495 aa).

Residue 244-249 (GSTEIG) participates in NAD(+) binding. Residues glutamate 266 and cysteine 300 contribute to the active site.

This sequence belongs to the aldehyde dehydrogenase family.

The enzyme catalyses an aldehyde + NAD(+) + H2O = a carboxylate + NADH + 2 H(+). This chain is Putative aldehyde dehydrogenase DhaS (dhaS), found in Bacillus subtilis (strain 168).